A 407-amino-acid polypeptide reads, in one-letter code: Serine/threonine transporter SstT (407 aa).

Transmembrane regions (helical) follow at residues 10–30 (AKGN…LIGI), 42–62 (LGIL…FILI), 81–101 (IIIL…LANF), 141–161 (ALSS…GAAL), 179–199 (VLKI…GLVA), 218–238 (ILLV…IVFF), 245–267 (FPLI…SSAA), 288–308 (ISIP…IAIL), and 316–336 (VGIE…TFAA).

It belongs to the dicarboxylate/amino acid:cation symporter (DAACS) (TC 2.A.23) family.

The protein resides in the cell inner membrane. It catalyses the reaction L-serine(in) + Na(+)(in) = L-serine(out) + Na(+)(out). It carries out the reaction L-threonine(in) + Na(+)(in) = L-threonine(out) + Na(+)(out). Involved in the import of serine and threonine into the cell, with the concomitant import of sodium (symport system). The chain is Serine/threonine transporter SstT from Campylobacter jejuni subsp. doylei (strain ATCC BAA-1458 / RM4099 / 269.97).